The sequence spans 506 residues: D-alanine--D-alanyl carrier protein ligase (506 aa).

152–153 (TS) is an ATP binding site. Residue D197 participates in D-alanine binding. Residue 292-297 (NTYGPT) coordinates ATP. D-alanine is bound at residue V301. ATP is bound by residues D383, 395–398 (YRGR), and K494. K494 serves as a coordination point for D-alanine.

This sequence belongs to the ATP-dependent AMP-binding enzyme family. DltA subfamily.

The protein resides in the cytoplasm. It carries out the reaction holo-[D-alanyl-carrier protein] + D-alanine + ATP = D-alanyl-[D-alanyl-carrier protein] + AMP + diphosphate. The protein operates within cell wall biogenesis; lipoteichoic acid biosynthesis. Catalyzes the first step in the D-alanylation of lipoteichoic acid (LTA), the activation of D-alanine and its transfer onto the D-alanyl carrier protein (Dcp) DltC. In an ATP-dependent two-step reaction, forms a high energy D-alanyl-AMP intermediate, followed by transfer of the D-alanyl residue as a thiol ester to the phosphopantheinyl prosthetic group of the Dcp. D-alanylation of LTA plays an important role in modulating the properties of the cell wall in Gram-positive bacteria, influencing the net charge of the cell wall. The protein is D-alanine--D-alanyl carrier protein ligase of Lacticaseibacillus rhamnosus (Lactobacillus rhamnosus).